The following is a 110-amino-acid chain: Ribonuclease P protein component 1 (110 aa).

Belongs to the eukaryotic/archaeal RNase P protein component 1 family. As to quaternary structure, consists of a catalytic RNA component and at least 4-5 protein subunits.

The protein localises to the cytoplasm. The catalysed reaction is Endonucleolytic cleavage of RNA, removing 5'-extranucleotides from tRNA precursor.. In terms of biological role, part of ribonuclease P, a protein complex that generates mature tRNA molecules by cleaving their 5'-ends. The polypeptide is Ribonuclease P protein component 1 (Methanosarcina barkeri (strain Fusaro / DSM 804)).